Reading from the N-terminus, the 587-residue chain is Xyloglucan-specific endo-beta-1,4-glucanase BoGH9A (587 aa).

Residues 1–19 form the signal peptide; sequence MKIVRYIALFGILSGLAVA. C20 carries N-palmitoyl cysteine lipidation. C20 carries the S-diacylglycerol cysteine lipid modification. Residue D185 is the Nucleophile of the active site. Residues H511 and D553 contribute to the active site. Residue E562 is the Proton donor of the active site.

This sequence belongs to the glycosyl hydrolase 9 (cellulase E) family.

The protein resides in the cell outer membrane. The catalysed reaction is xyloglucan + H2O = xyloglucan oligosaccharides.. The protein operates within glucan metabolism; xyloglucan degradation. Catalyzes endohydrolysis of 1,4-beta-D-glucosidic linkages in xyloglucan with retention of the beta-configuration of the glycosyl residues in xyloglucan degradation. Cleaves the backbone of the 3 major types of natural xyloglucans (seed galactoxyloglucan from tamarind kernel, dicot fucogalactoxyloglucan from lettuce leaves, and solanaceous arabinogalactoxyloglucan from tomato fruit), to produce xyloglucan oligosaccharides. May be superfluous in xyloglucan degradation compared to BoGH5A (AC A7LXT7), the other Xyloglucan-specific endo-beta-1,4-glucanase. The chain is Xyloglucan-specific endo-beta-1,4-glucanase BoGH9A from Bacteroides ovatus (strain ATCC 8483 / DSM 1896 / JCM 5824 / BCRC 10623 / CCUG 4943 / NCTC 11153).